A 121-amino-acid chain; its full sequence is Putative iron-sulfur cluster insertion protein ErpA (121 aa).

Iron-sulfur cluster contacts are provided by Cys49, Cys113, and Cys115.

The protein belongs to the HesB/IscA family. Homodimer. The cofactor is iron-sulfur cluster.

In terms of biological role, required for insertion of 4Fe-4S clusters. The chain is Putative iron-sulfur cluster insertion protein ErpA from Nitrosomonas europaea (strain ATCC 19718 / CIP 103999 / KCTC 2705 / NBRC 14298).